A 141-amino-acid polypeptide reads, in one-letter code: Large ribosomal subunit protein uL11 (141 aa).

It belongs to the universal ribosomal protein uL11 family. Part of the ribosomal stalk of the 50S ribosomal subunit. Interacts with L10 and the large rRNA to form the base of the stalk. L10 forms an elongated spine to which L12 dimers bind in a sequential fashion forming a multimeric L10(L12)X complex. Post-translationally, one or more lysine residues are methylated.

In terms of biological role, forms part of the ribosomal stalk which helps the ribosome interact with GTP-bound translation factors. In Exiguobacterium sp. (strain ATCC BAA-1283 / AT1b), this protein is Large ribosomal subunit protein uL11.